The chain runs to 538 residues: MGESDAYYNGGQQQQYNGGYQQQYQPQPPAASYQAPPQQPYQQQPYQQGPPQNGTGNGNGYMPAQGYNANEKGSFDEQFKIAKPKYNDLWAGILLILVFAGFVVVSGLALQGYSANKGNAGDGIYNNKNDFSPNTSTVILFMFVLAVAFVLSYAYVWMARLFPKQFIWVTGILNVCWAIGTAIFYLWRKYWSAGIVFLIFGLFMAFCFWTWISRIPFSALMLKTTIDVSKKYGHVYLVSLIGGIIATAFSAWYAITLVGIYVKYQPAQDNPSCADGGCGKGKVIGLIAFITFAMYWFSEWLKNTIHTTIAGVYGSWYFNPHNFPKDATRASAKRALTYSFGSIALGSLLVAIIQFLRQICNAARNQEGADGSFVGYAIFCCISCLLGLLEWAVEFINRYAFCHIALYGKAYFAAAKDTWKMIKDRGIDALINDCLIGPVLSFGALFIAYACALLAYLYLYFTDPAYNSDGQYTAVVMAFSFLIGFQIANVFTTPISSGIETIFVAAGWDPQVMWRDHPELYNEMVRVYPKVQQVIKDR.

The segment covering 1–54 has biased composition (low complexity); it reads MGESDAYYNGGQQQQYNGGYQQQYQPQPPAASYQAPPQQPYQQQPYQQGPPQNG. The segment at 1–67 is disordered; that stretch reads MGESDAYYNG…GNGYMPAQGY (67 aa). At 1 to 88 the chain is on the cytoplasmic side; it reads MGESDAYYNG…FKIAKPKYND (88 aa). A helical transmembrane segment spans residues 89-109; that stretch reads LWAGILLILVFAGFVVVSGLA. Topologically, residues 110 to 137 are extracellular; the sequence is LQGYSANKGNAGDGIYNNKNDFSPNTST. N-linked (GlcNAc...) asparagine glycosylation is present at N134. A helical membrane pass occupies residues 138-158; it reads VILFMFVLAVAFVLSYAYVWM. Residues 159–165 are Cytoplasmic-facing; that stretch reads ARLFPKQ. A helical transmembrane segment spans residues 166 to 186; it reads FIWVTGILNVCWAIGTAIFYL. At 187–191 the chain is on the extracellular side; the sequence is WRKYW. Residues 192 to 212 traverse the membrane as a helical segment; the sequence is SAGIVFLIFGLFMAFCFWTWI. Residues 213 to 239 are Cytoplasmic-facing; the sequence is SRIPFSALMLKTTIDVSKKYGHVYLVS. Residues 240-260 traverse the membrane as a helical segment; that stretch reads LIGGIIATAFSAWYAITLVGI. Topologically, residues 261 to 280 are extracellular; the sequence is YVKYQPAQDNPSCADGGCGK. A helical membrane pass occupies residues 281 to 301; the sequence is GKVIGLIAFITFAMYWFSEWL. At 302–335 the chain is on the cytoplasmic side; it reads KNTIHTTIAGVYGSWYFNPHNFPKDATRASAKRA. A helical membrane pass occupies residues 336 to 356; that stretch reads LTYSFGSIALGSLLVAIIQFL. Over 357–372 the chain is Extracellular; it reads RQICNAARNQEGADGS. A helical membrane pass occupies residues 373-393; it reads FVGYAIFCCISCLLGLLEWAV. Over 394 to 434 the chain is Cytoplasmic; sequence EFINRYAFCHIALYGKAYFAAAKDTWKMIKDRGIDALINDC. Residues 435-455 form a helical membrane-spanning segment; it reads LIGPVLSFGALFIAYACALLA. Residues 456–474 lie on the Extracellular side of the membrane; it reads YLYLYFTDPAYNSDGQYTA. The chain crosses the membrane as a helical span at residues 475-495; sequence VVMAFSFLIGFQIANVFTTPI. Residues 496 to 538 lie on the Cytoplasmic side of the membrane; that stretch reads SSGIETIFVAAGWDPQVMWRDHPELYNEMVRVYPKVQQVIKDR.

It belongs to the CTL (choline transporter-like) family.

It is found in the cell membrane. In terms of biological role, probably involved in transport through the plasma membrane. The chain is Protein PNS1 (PNS1) from Gibberella zeae (strain ATCC MYA-4620 / CBS 123657 / FGSC 9075 / NRRL 31084 / PH-1) (Wheat head blight fungus).